We begin with the raw amino-acid sequence, 627 residues long: Alpha-terpineol synthase, chloroplastic (627 aa).

Residues 1–53 (MAGITGVMNMKLAARPSSGRHSRGCRPAVVPSAGKQMLLVRRHPPGSASWPTR) constitute a chloroplast transit peptide. A disordered region spans residues 13–90 (AARPSSGRHS…EDRASRNTSS (78 aa)). Positions 339, 376, 380, 518, and 521 each coordinate (2E)-geranyl diphosphate. Residues Asp376 and Asp380 each coordinate Mg(2+). Residues 376–380 (DDTYD) carry the DDXXD motif motif. 3 residues coordinate Mg(2+): Asp521, Ser525, and Glu529.

Belongs to the terpene synthase family. Tpsb subfamily. As to quaternary structure, monomer. It depends on Mg(2+) as a cofactor. The cofactor is Mn(2+). In terms of tissue distribution, expressed in seedling leaf sheaths and roots.

The protein localises to the plastid. It is found in the chloroplast. The enzyme catalyses (2E)-geranyl diphosphate + H2O = (S)-alpha-terpineol + diphosphate. It catalyses the reaction (2E)-geranyl diphosphate = (4S)-limonene + diphosphate. The catalysed reaction is (2E)-geranyl diphosphate = gamma-terpinene + diphosphate. It carries out the reaction (2E)-geranyl diphosphate = beta-myrcene + diphosphate. The enzyme catalyses (2E)-geranyl diphosphate = terpinolene + diphosphate. It catalyses the reaction (2E)-geranyl diphosphate + H2O = 4-terpineol + diphosphate. Its pathway is secondary metabolite biosynthesis; terpenoid biosynthesis. Its function is as follows. Component of the volatile terpenes biosynthesis pathways. Mediates the synthesis of a blend of monoterpenes. Converts mainly geranyl diphosphate to alpha-terpineol. Also triggers the biosynthesis of minor monoterpenes including limonene, gamma-terpinene, beta-myrcene, terpinolene and 4-terpineol. This Zea mays (Maize) protein is Alpha-terpineol synthase, chloroplastic.